Reading from the N-terminus, the 115-residue chain is Cyclin-dependent kinase 2-associated protein 1 (115 aa).

Residues 20–25 form an interaction with CDK2AP2 region; it reads GSVHSP. A Phosphoserine; by IKKE modification is found at S46.

Belongs to the CDK2AP family. In terms of assembly, homodimer. Component of the nucleosome remodeling and deacetylase (NuRD) repressor complex, composed of core proteins MTA1, MTA2, MTA3, RBBP4, RBBP7, HDAC1, HDAC2, MBD2, MBD3, and peripherally associated proteins CDK2AP1, CDK2AP2, GATAD2A, GATAD2B, CHD3, CHD4 and CHD5. The exact stoichiometry of the NuRD complex is unknown, and some subunits such as MBD2 and MBD3, GATAD2A and GATAD2B, and CHD3, CHD4 and CHD5 define mutually exclusive NuRD complexes. Interacts with monomeric unphosphorylated CDK2. Interacts with CDK2AP2. Interacts with GATAD2A. Interacts with HDAC1. Interacts with HDAC2. Interacts with MBD2. Interacts with MBD3. Interacts with RBBP4. Interacts with RBBP7. Phosphorylated in vitro by IKBKE at Ser-46.

The protein localises to the nucleus. It is found in the chromosome. In terms of biological role, inhibitor of cyclin-dependent kinase CDK2. Also acts as a component of the histone deacetylase NuRD complex which participates in the remodeling of chromatin. This Homo sapiens (Human) protein is Cyclin-dependent kinase 2-associated protein 1 (CDK2AP1).